A 354-amino-acid chain; its full sequence is Uroporphyrinogen decarboxylase (354 aa).

Substrate contacts are provided by residues 27–31 (RQAGR), D77, Y154, T209, and H327.

The protein belongs to the uroporphyrinogen decarboxylase family. In terms of assembly, homodimer.

It is found in the cytoplasm. It catalyses the reaction uroporphyrinogen III + 4 H(+) = coproporphyrinogen III + 4 CO2. It participates in porphyrin-containing compound metabolism; protoporphyrin-IX biosynthesis; coproporphyrinogen-III from 5-aminolevulinate: step 4/4. Functionally, catalyzes the decarboxylation of four acetate groups of uroporphyrinogen-III to yield coproporphyrinogen-III. This chain is Uroporphyrinogen decarboxylase, found in Actinobacillus pleuropneumoniae serotype 5b (strain L20).